The sequence spans 231 residues: uncharacterized protein (231 aa).

Residue 10 to 34 (VVTGAGSGIGEAIATLLHEEGAKVV) coordinates NADP(+). Ser140 contacts substrate. Tyr153 acts as the Proton acceptor in catalysis.

Belongs to the short-chain dehydrogenases/reductases (SDR) family.

This is an uncharacterized protein from Staphylococcus aureus (strain MRSA252).